Here is a 546-residue protein sequence, read N- to C-terminus: MAKEIKFSDSARNLLFEGVRQLHDAVKVTMGPRGRNVLIQKSYGAPSITKDGVSVAKEIELSCPVANMGAQLVKEVASKTADAAGDGTTTATVLAYSIFKEGLRNITAGANPIEVKRGMDKAAEAIINELKKASKKVGGKEEITQVATISANSDHNIGKLIADAMEKVGKDGVITVEEAKGIEDELDVVEGMQFDRGYLSPYFVTNAEKMTAQLDNAYILLTDKKISSMKDILPLLEKTMKEGKPLLIIAEDIEGEALTTLVVNKLRGVLNIAAVKAPGFGDRRKEMLKDIAVLTGGQVISEELGLSLENAEVEFLGKAGRIVIDKDNTTIVDGKGHSDDVKDRVAQIKTQIASTTSDYDKEKLQERLAKLSGGVAVIKVGAASEVEMKEKKDRVDDALSATKAAVEEGIVIGGGAALIRAAQKVHLNLHDDEKVGYEIIMRAIKAPLAQIAINAGYDGGVVVNEVEKHEGHFGFNASNGKYVDMFKEGIIDPLKVERIALQNAVSVSSLLLTTEATVHEIKEEKAAPAMPDMGGMGGMGGMGGMM.

Residues 29 to 32 (TMGP), Lys50, 86 to 90 (DGTTT), Gly414, and Asp492 each bind ATP.

It belongs to the chaperonin (HSP60) family. Forms a cylinder of 14 subunits composed of two heptameric rings stacked back-to-back. Interacts with the co-chaperonin GroES.

The protein localises to the cytoplasm. It carries out the reaction ATP + H2O + a folded polypeptide = ADP + phosphate + an unfolded polypeptide.. Together with its co-chaperonin GroES, plays an essential role in assisting protein folding. The GroEL-GroES system forms a nano-cage that allows encapsulation of the non-native substrate proteins and provides a physical environment optimized to promote and accelerate protein folding. The chain is Chaperonin GroEL from Helicobacter pylori (strain G27).